Reading from the N-terminus, the 117-residue chain is Putative pterin-4-alpha-carbinolamine dehydratase (117 aa).

Belongs to the pterin-4-alpha-carbinolamine dehydratase family.

The catalysed reaction is (4aS,6R)-4a-hydroxy-L-erythro-5,6,7,8-tetrahydrobiopterin = (6R)-L-erythro-6,7-dihydrobiopterin + H2O. The protein is Putative pterin-4-alpha-carbinolamine dehydratase of Azoarcus sp. (strain BH72).